A 738-amino-acid chain; its full sequence is MGTSVQVTPLSGAYGEGPLCYLLAVDGFRFLLDCGWTDLCDPSHLQPLAKVAPTIDAVLLSHADTMHLGALPYAMKHLGLSAPVYATEPVFRLGILTLYDYFISRRQVSDFDLFTLDDIDAAFQNVVRLKYSQNHLLNDKGEGIVIAPHVAGHDLGGTVWKITKDGEDVVYAVDFNHRKERHLNGTALGSFVRPAVLITDAYNALNNHVYKRQQDQDFIDALVKVLTGGGSVLLPIDTAGRVLEILLILEQYWAQRHLIYPIYFLTNVSTSTVDYVKSFLEWMNDSISKSFEHTRDNAFLLKCVTQIINKDELEKLGDAPKVVLASMASLEVGFSHDIFVDMANEAKNLVLFTEKGQFGTLARMLQVDPPPKAVKVTMSKRIPLVGDELKAYEEEQERIKKEEALKASLNKEEEKKASLGSNAKASDPMVIDASTSRKPSNAGSKFGGNVDILIDGFVPPSSSVAPMFPFFENTSEWDDFGEVINPEDYLMKQEEMDNTLMPGAGDGMDSMLDEGSARLLLDSTPSKVISNEMTVQVKCSLAYMDFEGRSDGRSVKSVIAHVAPLKLVLVHGSAEATEHLKMHCSKNSDLHVYAPQIEETIDVTSDLCAYKVQLSEKLMSNVISKKLGEHEIAWVDAEVGKTDDKLTLLPPSSTPAAHKSVLVGDLKLADFKQFLANKGLQVEFAGGALRCGEYITLRKIGDAGQKGSTGSQQIVIEGPLCEDYYKIRELLYSQFYLL.

Belongs to the metallo-beta-lactamase superfamily. RNA-metabolizing metallo-beta-lactamase-like family. CPSF2/YSH1 subfamily. CPSF is a heterotetramer composed of four distinct subunits 160, 100, 70 and 30 kDa.

Its subcellular location is the nucleus. Its function is as follows. CPSF plays a key role in pre-mRNA 3'-end formation, recognizing the AAUAAA signal sequence and interacting with poly(A)polymerase and other factors to bring about cleavage and poly(A) addition. The polypeptide is Cleavage and polyadenylation specificity factor subunit 2 (Oryza sativa subsp. japonica (Rice)).